The sequence spans 863 residues: Leucine--tRNA ligase (863 aa).

The short motif at 42 to 52 is the 'HIGH' region element; that stretch reads PYPSGKIHMGH. A 'KMSKS' region motif is present at residues 618-622; the sequence is KMSKS. K621 provides a ligand contact to ATP.

Belongs to the class-I aminoacyl-tRNA synthetase family.

The protein resides in the cytoplasm. It catalyses the reaction tRNA(Leu) + L-leucine + ATP = L-leucyl-tRNA(Leu) + AMP + diphosphate. The sequence is that of Leucine--tRNA ligase from Desulfatibacillum aliphaticivorans.